We begin with the raw amino-acid sequence, 423 residues long: Adenylosuccinate synthetase (423 aa).

GTP contacts are provided by residues 11–17 and 39–41; these read GDEGKGK and GHT. Asp-12 serves as the catalytic Proton acceptor. Asp-12 and Gly-39 together coordinate Mg(2+). IMP-binding positions include 12-15, 37-40, Thr-127, Arg-141, Gln-223, Thr-238, and Arg-302; these read DEGK and NAGH. His-40 acts as the Proton donor in catalysis. A substrate-binding site is contributed by 298 to 304; that stretch reads TTTGRSR. Residues Arg-304, 330 to 332, and 412 to 414 contribute to the GTP site; these read KLD and SVG.

The protein belongs to the adenylosuccinate synthetase family. Homodimer. Requires Mg(2+) as cofactor.

The protein localises to the cytoplasm. It carries out the reaction IMP + L-aspartate + GTP = N(6)-(1,2-dicarboxyethyl)-AMP + GDP + phosphate + 2 H(+). It participates in purine metabolism; AMP biosynthesis via de novo pathway; AMP from IMP: step 1/2. In terms of biological role, plays an important role in the de novo pathway of purine nucleotide biosynthesis. Catalyzes the first committed step in the biosynthesis of AMP from IMP. This chain is Adenylosuccinate synthetase, found in Methanococcoides burtonii (strain DSM 6242 / NBRC 107633 / OCM 468 / ACE-M).